The primary structure comprises 1370 residues: DNA-directed RNA polymerase subunit beta (1370 aa).

This sequence belongs to the RNA polymerase beta chain family. As to quaternary structure, the RNAP catalytic core consists of 2 alpha, 1 beta, 1 beta' and 1 omega subunit. When a sigma factor is associated with the core the holoenzyme is formed, which can initiate transcription.

It catalyses the reaction RNA(n) + a ribonucleoside 5'-triphosphate = RNA(n+1) + diphosphate. In terms of biological role, DNA-dependent RNA polymerase catalyzes the transcription of DNA into RNA using the four ribonucleoside triphosphates as substrates. The protein is DNA-directed RNA polymerase subunit beta of Bordetella pertussis (strain Tohama I / ATCC BAA-589 / NCTC 13251).